Here is a 294-residue protein sequence, read N- to C-terminus: ATP synthase gamma chain (294 aa).

This sequence belongs to the ATPase gamma chain family. F-type ATPases have 2 components, CF(1) - the catalytic core - and CF(0) - the membrane proton channel. CF(1) has five subunits: alpha(3), beta(3), gamma(1), delta(1), epsilon(1). CF(0) has three main subunits: a, b and c.

The protein resides in the cell inner membrane. Produces ATP from ADP in the presence of a proton gradient across the membrane. The gamma chain is believed to be important in regulating ATPase activity and the flow of protons through the CF(0) complex. This is ATP synthase gamma chain from Campylobacter jejuni subsp. jejuni serotype O:6 (strain 81116 / NCTC 11828).